The following is a 152-amino-acid chain: Small ribosomal subunit protein bS6 (152 aa).

The interval 94-152 is disordered; the sequence is VKQEGPLPTPKPSNKSSTQSENKDNPETKVESKEEQSVTNSDTSTTKKDDNEIKENTES. Composition is skewed to basic and acidic residues over residues 114–129 and 138–152; these read ENKDNPETKVESKEEQ and TTKKDDNEIKENTES.

This sequence belongs to the bacterial ribosomal protein bS6 family.

Binds together with bS18 to 16S ribosomal RNA. In Prochlorococcus marinus (strain MIT 9312), this protein is Small ribosomal subunit protein bS6.